The chain runs to 223 residues: Phosphoribosylformylglycinamidine synthase subunit PurQ (223 aa).

The Glutamine amidotransferase type-1 domain maps to 3–223; sequence SAVVQLPGLN…FASALDVVAA (221 aa). C86 acts as the Nucleophile in catalysis. Catalysis depends on residues H196 and E198.

Part of the FGAM synthase complex composed of 1 PurL, 1 PurQ and 2 PurS subunits.

The protein localises to the cytoplasm. The catalysed reaction is N(2)-formyl-N(1)-(5-phospho-beta-D-ribosyl)glycinamide + L-glutamine + ATP + H2O = 2-formamido-N(1)-(5-O-phospho-beta-D-ribosyl)acetamidine + L-glutamate + ADP + phosphate + H(+). It catalyses the reaction L-glutamine + H2O = L-glutamate + NH4(+). The protein operates within purine metabolism; IMP biosynthesis via de novo pathway; 5-amino-1-(5-phospho-D-ribosyl)imidazole from N(2)-formyl-N(1)-(5-phospho-D-ribosyl)glycinamide: step 1/2. Part of the phosphoribosylformylglycinamidine synthase complex involved in the purines biosynthetic pathway. Catalyzes the ATP-dependent conversion of formylglycinamide ribonucleotide (FGAR) and glutamine to yield formylglycinamidine ribonucleotide (FGAM) and glutamate. The FGAM synthase complex is composed of three subunits. PurQ produces an ammonia molecule by converting glutamine to glutamate. PurL transfers the ammonia molecule to FGAR to form FGAM in an ATP-dependent manner. PurS interacts with PurQ and PurL and is thought to assist in the transfer of the ammonia molecule from PurQ to PurL. This Rhizobium etli (strain ATCC 51251 / DSM 11541 / JCM 21823 / NBRC 15573 / CFN 42) protein is Phosphoribosylformylglycinamidine synthase subunit PurQ.